We begin with the raw amino-acid sequence, 169 residues long: Lipoprotein signal peptidase (169 aa).

The next 4 membrane-spanning stretches (helical) occupy residues 10–30, 40–60, 68–88, and 94–114; these read LPWL…KAFF, IVVI…AAFS, WQRW…VVWL, and GETW…GNLY. Residues aspartate 124 and aspartate 143 contribute to the active site. The chain crosses the membrane as a helical span at residues 135–155; sequence YFPAFNLADSAITVGAVMLAL.

Belongs to the peptidase A8 family.

Its subcellular location is the cell inner membrane. It catalyses the reaction Release of signal peptides from bacterial membrane prolipoproteins. Hydrolyzes -Xaa-Yaa-Zaa-|-(S,diacylglyceryl)Cys-, in which Xaa is hydrophobic (preferably Leu), and Yaa (Ala or Ser) and Zaa (Gly or Ala) have small, neutral side chains.. It functions in the pathway protein modification; lipoprotein biosynthesis (signal peptide cleavage). Functionally, this protein specifically catalyzes the removal of signal peptides from prolipoproteins. The chain is Lipoprotein signal peptidase from Pseudomonas aeruginosa (strain UCBPP-PA14).